The following is a 226-amino-acid chain: Staphylococcal superantigen-like 1 (226 aa).

The N-terminal stretch at 1-30 (MKFKAIAKASLALGMLATGVITSNVQSVQA) is a signal peptide.

Belongs to the staphylococcal/streptococcal toxin family. As to quaternary structure, homodimer.

The protein resides in the secreted. Functionally, mediates virulence by proteolytically cleaving host proteins, including collagens types I and IV as well as human cytokines IL8, IL17A, and IFN-gamma. The polypeptide is Staphylococcal superantigen-like 1 (Staphylococcus aureus (strain NCTC 8325 / PS 47)).